Here is a 91-residue protein sequence, read N- to C-terminus: Small ribosomal subunit protein bS20 (91 aa).

The span at 1 to 18 shows a compositional bias: basic and acidic residues; it reads MPLHKSAEKRLRQSDRKN. The segment at 1-25 is disordered; it reads MPLHKSAEKRLRQSDRKNARNRARK.

This sequence belongs to the bacterial ribosomal protein bS20 family.

Functionally, binds directly to 16S ribosomal RNA. The sequence is that of Small ribosomal subunit protein bS20 from Chlorobium phaeovibrioides (strain DSM 265 / 1930) (Prosthecochloris vibrioformis (strain DSM 265)).